A 308-amino-acid chain; its full sequence is MKQIHVIDSHTGGEPTRLVMKGFPQLRGRSMAEQRDELRELHDRWRRACLLEPRGNDVLVGALYCPPVSADATCGVIFFNNAGYLNMCGHGTIGLVASLQHMGLITPGVHKIDTPVGQVSATLHEDGAITVANVPSYRYRQQVAVDVPGHGVVRGDIAWGGNWFFLVSEHGQRIELDNREALTEYTWAMLKALETQGVTGENGAPIDHIELFADDPNADSRNFVMCPGKAYDRSPCGTGTSAKLACLAADGKLAEGQTWVQASITGSQFHGRYARDGERIRPFITGRAYMTADSTLLIDEQDPFAWGI.

The Proton acceptor role is filled by Cys-88. Substrate is bound by residues Gly-89–His-90, His-208, and Asp-232. Cys-236 functions as the Proton donor in the catalytic mechanism. Gly-237–Thr-238 serves as a coordination point for substrate.

This sequence belongs to the proline racemase family.

The catalysed reaction is trans-4-hydroxy-L-proline = cis-4-hydroxy-D-proline. Functionally, catalyzes the reversible epimerization of cis-4-hydroxy-D-proline (c4DHyp) to trans-4-hydroxy-L-proline (t4LHyp). May be involved in a degradation pathway that allows P.putida strain KT2440 to grow on either epimer of 4-hydroxyproline, c4DHyp and t4LHyp, as the sole carbon and nitrogen source. Does not exhibit measureable racemase activity in vitro with any of the 19 natural chiral amino acid enantiomers. The chain is 4-hydroxyproline 2-epimerase from Pseudomonas putida (strain ATCC 47054 / DSM 6125 / CFBP 8728 / NCIMB 11950 / KT2440).